A 76-amino-acid chain; its full sequence is Exodeoxyribonuclease 7 small subunit (76 aa).

Belongs to the XseB family. As to quaternary structure, heterooligomer composed of large and small subunits.

Its subcellular location is the cytoplasm. The catalysed reaction is Exonucleolytic cleavage in either 5'- to 3'- or 3'- to 5'-direction to yield nucleoside 5'-phosphates.. Functionally, bidirectionally degrades single-stranded DNA into large acid-insoluble oligonucleotides, which are then degraded further into small acid-soluble oligonucleotides. In Lactiplantibacillus plantarum (strain ATCC BAA-793 / NCIMB 8826 / WCFS1) (Lactobacillus plantarum), this protein is Exodeoxyribonuclease 7 small subunit.